Reading from the N-terminus, the 311-residue chain is Heme A synthase (311 aa).

Over 1-6 (MQRFIK) the chain is Cytoplasmic. Residues 7–27 (WLAVITSLDLLIVLLGGALVT) traverse the membrane as a helical segment. Over 28–62 (KTGSGQGCGKSWPLCNGEFVPSNLSMETIIELSHR) the chain is Extracellular. Residues Cys-35 and Cys-42 are joined by a disulfide bond. The active site involves Glu-58. His-61 serves as a coordination point for heme o. A helical transmembrane segment spans residues 63-83 (LTSGSAGILVTLLCILSWKYY). At 84–91 (KHVRETKT) the chain is on the cytoplasmic side. Residues 92–112 (LAILSFVFLVAQALMGAAAVV) traverse the membrane as a helical segment. Topologically, residues 113 to 121 (WGQMPAVLA) are extracellular. Residues 122-142 (IHFGISLISFASVILLTCLIF) form a helical membrane-spanning segment. His-123 is a heme o binding site. Residues 143–159 (EIDQKFDARSLIMDKKM) lie on the Cytoplasmic side of the membrane. The chain crosses the membrane as a helical span at residues 160-180 (KFHIYGVTIYSYIVVYTGALV). Residues 181 to 211 (RHERASLACPDFPLCSKNRPMPTQLHEWVQM) are Extracellular-facing. The cysteines at positions 189 and 195 are disulfide-linked. Residues 212 to 232 (GHRVAAMLIFAWILYAMILAI) form a helical membrane-spanning segment. Position 213 (His-213) interacts with heme b. Residues 233-243 (RHYKQQPVVYW) are Cytoplasmic-facing. A helical membrane pass occupies residues 244–264 (GWIISFILVTLQAVVGVLVVF). The Extracellular segment spans residues 265-271 (TNASLAM). A helical transmembrane segment spans residues 272–292 (ALLHSLFISCLFAVLCYLVML). Residue His-275 coordinates heme b. The Cytoplasmic segment spans residues 293–311 (GTRIKVNAKEAGSTSKQTK).

This sequence belongs to the COX15/CtaA family. Type 1 subfamily. As to quaternary structure, interacts with CtaB. It depends on heme b as a cofactor.

Its subcellular location is the cell membrane. The catalysed reaction is Fe(II)-heme o + 2 A + H2O = Fe(II)-heme a + 2 AH2. The protein operates within porphyrin-containing compound metabolism; heme A biosynthesis; heme A from heme O: step 1/1. Catalyzes the conversion of heme O to heme A by two successive hydroxylations of the methyl group at C8. The first hydroxylation forms heme I, the second hydroxylation results in an unstable dihydroxymethyl group, which spontaneously dehydrates, resulting in the formyl group of heme A. In Bacillus cereus (strain G9842), this protein is Heme A synthase.